A 226-amino-acid chain; its full sequence is Enolase-phosphatase E1 (226 aa).

It belongs to the HAD-like hydrolase superfamily. MasA/MtnC family. As to quaternary structure, monomer. Mg(2+) is required as a cofactor.

The enzyme catalyses 5-methylsulfanyl-2,3-dioxopentyl phosphate + H2O = 1,2-dihydroxy-5-(methylsulfanyl)pent-1-en-3-one + phosphate. The protein operates within amino-acid biosynthesis; L-methionine biosynthesis via salvage pathway; L-methionine from S-methyl-5-thio-alpha-D-ribose 1-phosphate: step 3/6. It functions in the pathway amino-acid biosynthesis; L-methionine biosynthesis via salvage pathway; L-methionine from S-methyl-5-thio-alpha-D-ribose 1-phosphate: step 4/6. Functionally, bifunctional enzyme that catalyzes the enolization of 2,3-diketo-5-methylthiopentyl-1-phosphate (DK-MTP-1-P) into the intermediate 2-hydroxy-3-keto-5-methylthiopentenyl-1-phosphate (HK-MTPenyl-1-P), which is then dephosphorylated to form the acireductone 1,2-dihydroxy-3-keto-5-methylthiopentene (DHK-MTPene). This chain is Enolase-phosphatase E1, found in Shewanella frigidimarina (strain NCIMB 400).